We begin with the raw amino-acid sequence, 713 residues long: MAVQDEYILVTGGAGYIGSHTVIELINHGYKVIIVDNLCNSCYDAVARVEFIVRKSIKFFKLDLRDKEGLAQIFDTFKIKGVIHFAALKAVGESMKLPLEYYDNNICGTITLLNVMREHRVKTVVFSSSATVYGDATRFDNMIPIPESCPNDPTNPYGKTKYAIENIIKDLHTSDNTWRGAILRYFNPIGAHPSGLLGEDPLGIPNNLLPFLAQVAIGRREKLLVFGDDYDSHDGTPIRDYIHVVDLAKGHIAALNYLNKINNSEGMYREWNLGTGKGSSVFDIYHAFCKEVGKDLPYEVVGRRTGDVLNLTASPNRANSELKWKAELSITDACRDLWKWTIENPFGFQIDNYKWKLFNTLGIMDYKNRLHTICFQDLEVSIANYGALVQAVRYKGRNLVNGFNDFSRYKLKENPFFGATIGRFANRIANGQFEVDGHLYTLCKNENNKTTLHGGNNGFDKQFFLGPIARQYEDYNTLEFILVDKDGNNGFPSDLETLVKYTIKNNSLEIEYKSVIPEYSKLNVTAVNLTNHSYWNLASPNKTIDGTIIKSTTNVYLKVNSETSLPTGDIVEWQNDITKPTKLDPNISFDNCFIVDREASKFCLDTRKYSLKNIVEVIHPSVPVKLVVSTTEPAFQLYTGDGNDICEFQSRSGFCVETGRFINALNNEKWSKQVILRKGEVYGARSKFSLYAQDLEENKHFLDSASYNSGEYY.

The segment at 1–350 is galactowaldenase; the sequence is MAVQDEYILV…TIENPFGFQI (350 aa). 7-38 is a binding site for NAD(+); that stretch reads YILVTGGAGYIGSHTVIELINHGYKVIIVDNL. A mutarotase region spans residues 351 to 713; it reads DNYKWKLFNT…SASYNSGEYY (363 aa). Catalysis depends on His532, which acts as the For mutarotase activity.

This sequence in the N-terminal section; belongs to the NAD(P)-dependent epimerase/dehydratase family. It in the C-terminal section; belongs to the aldose epimerase family. Requires NAD(+) as cofactor.

It carries out the reaction UDP-alpha-D-glucose = UDP-alpha-D-galactose. It catalyses the reaction alpha-D-glucose = beta-D-glucose. Its pathway is carbohydrate metabolism; galactose metabolism. The protein operates within carbohydrate metabolism; hexose metabolism. Functionally, mutarotase converts alpha-aldose to the beta-anomer. It is active on D-glucose, L-arabinose, D-xylose, D-galactose, maltose and lactose. In Schizosaccharomyces pombe (strain 972 / ATCC 24843) (Fission yeast), this protein is Bifunctional protein gal10 (gal10).